Consider the following 276-residue polypeptide: Type II pantothenate kinase (276 aa).

Position 8–15 (8–15 (DAGGTLTK)) interacts with ATP. E76 serves as the catalytic Proton acceptor. Residues T105, 127–131 (GGTIM), F143, and S230 each bind ATP.

Belongs to the type II pantothenate kinase family. Homodimer.

It is found in the cytoplasm. The enzyme catalyses (R)-pantothenate + ATP = (R)-4'-phosphopantothenate + ADP + H(+). Its pathway is cofactor biosynthesis; coenzyme A biosynthesis; CoA from (R)-pantothenate: step 1/5. Catalyzes the phosphorylation of pantothenate (Pan), the first step in CoA biosynthesis. The chain is Type II pantothenate kinase from Bacillus cereus (strain AH820).